We begin with the raw amino-acid sequence, 291 residues long: Bifunctional protein FolD (291 aa).

NADP(+) contacts are provided by residues 167-169 (GRS) and serine 192.

The protein belongs to the tetrahydrofolate dehydrogenase/cyclohydrolase family. As to quaternary structure, homodimer.

The catalysed reaction is (6R)-5,10-methylene-5,6,7,8-tetrahydrofolate + NADP(+) = (6R)-5,10-methenyltetrahydrofolate + NADPH. The enzyme catalyses (6R)-5,10-methenyltetrahydrofolate + H2O = (6R)-10-formyltetrahydrofolate + H(+). It functions in the pathway one-carbon metabolism; tetrahydrofolate interconversion. Catalyzes the oxidation of 5,10-methylenetetrahydrofolate to 5,10-methenyltetrahydrofolate and then the hydrolysis of 5,10-methenyltetrahydrofolate to 10-formyltetrahydrofolate. In Leptospira biflexa serovar Patoc (strain Patoc 1 / Ames), this protein is Bifunctional protein FolD.